Here is a 356-residue protein sequence, read N- to C-terminus: Alanine racemase (356 aa).

Residue Lys-35 is the Proton acceptor; specific for D-alanine of the active site. Lys-35 carries the post-translational modification N6-(pyridoxal phosphate)lysine. A substrate-binding site is contributed by Arg-130. Residue Tyr-253 is the Proton acceptor; specific for L-alanine of the active site. Met-301 is a substrate binding site.

It belongs to the alanine racemase family. Requires pyridoxal 5'-phosphate as cofactor.

The catalysed reaction is L-alanine = D-alanine. Its pathway is amino-acid biosynthesis; D-alanine biosynthesis; D-alanine from L-alanine: step 1/1. Its function is as follows. Catalyzes the interconversion of L-alanine and D-alanine. May also act on other amino acids. The chain is Alanine racemase (alr) from Erwinia tasmaniensis (strain DSM 17950 / CFBP 7177 / CIP 109463 / NCPPB 4357 / Et1/99).